The primary structure comprises 83 residues: MNIVPILLIRFYQSFISPLLGPSCKYHPTCSNYAIEAFRQHNFFYASWLTVWRVLRCNPFSKGGYDPVPPKSVKSAGNSKDSK.

Residues 62-83 (KGGYDPVPPKSVKSAGNSKDSK) form a disordered region.

This sequence belongs to the UPF0161 family.

It is found in the cell inner membrane. Functionally, could be involved in insertion of integral membrane proteins into the membrane. The chain is Putative membrane protein insertion efficiency factor from Chlorobaculum tepidum (strain ATCC 49652 / DSM 12025 / NBRC 103806 / TLS) (Chlorobium tepidum).